A 771-amino-acid polypeptide reads, in one-letter code: MATLQDIGVSAGINILSAFVFFIIFAVLRLQPFNDRVYFSKWYLKGLRSSPARGGAFAQRFVNLDFRSYMKFLNWMPEALKMPEPELIDHAGLDSVVYLRIYWLGLKIFTPIAVLAWAVLVPVNWTNNTLEMAKQLRNVTSSDIDKLSVSNIPEYSMRFWTHIVMAYAFTIWTCYVLMKEYETIANMRLQFVASEARRPDQFTVLVRNVPPDADESVSELVEHFFLVNHPDHYLTHQVVCNANKLADLVKKKKKLQNWLDYYQLKYARNNSQRIMVKLGFLGLWGQKVDAIEHYIAEIDKISKEISKEREEVVNDPKAIMPAAFVSFKTRWAAAVCAQTQQTRNPTQWLTEWAPEPRDVFWSNLAIPYVSLTVRRLIMHVAFFFLTFFFIVPIAFVQSLATIEGIVKAAPFLKFIVDDKFMKSVIQGFLPGIALKLFLAFLPSILMIMSKFEGFTSISSLERRAAFRYYIFNLVNVFLASVIAGAAFEQLNSFLNQSANQIPKTIGVAIPMKATFFITYIMVDGWAGVAGEILMLKPLIMFHLKNAFLVKTDKDREEAMDPGSIGFNTGEPRIQLYFLLGLVYAPVTPMLLPFILVFFALAYIVYRHQIINVYNQEYESAAAFWPDVHGRVIAALVISQLLLMGLLGTKHAALAAPFLIALPVLTIGFHHFCKGRYEPAFIRYPLQEAMMKDTLETAREPNLNLKGYLQNAYVHPVFKGDEDDYDIDDKLGKFEDEAIIVPTKRQSRRNTPAPSIISGDDSPSLPFSGKLV.

At 1–4 (MATL) the chain is on the extracellular side. The helical transmembrane segment at 5 to 27 (QDIGVSAGINILSAFVFFIIFAV) threads the bilayer. The Cytoplasmic segment spans residues 28 to 100 (LRLQPFNDRV…AGLDSVVYLR (73 aa)). A helical membrane pass occupies residues 101 to 125 (IYWLGLKIFTPIAVLAWAVLVPVNW). Residues 126 to 156 (TNNTLEMAKQLRNVTSSDIDKLSVSNIPEYS) are Extracellular-facing. A helical membrane pass occupies residues 157–178 (MRFWTHIVMAYAFTIWTCYVLM). Residues 179 to 374 (KEYETIANMR…AIPYVSLTVR (196 aa)) are Cytoplasmic-facing. A helical membrane pass occupies residues 375 to 401 (RLIMHVAFFFLTFFFIVPIAFVQSLAT). Over 402–419 (IEGIVKAAPFLKFIVDDK) the chain is Extracellular. A helical transmembrane segment spans residues 420–445 (FMKSVIQGFLPGIALKLFLAFLPSIL). At 446–462 (MIMSKFEGFTSISSLER) the chain is on the cytoplasmic side. Residues 463–485 (RAAFRYYIFNLVNVFLASVIAGA) form a helical membrane-spanning segment. Residues 486-504 (AFEQLNSFLNQSANQIPKT) are Extracellular-facing. Residues 505-533 (IGVAIPMKATFFITYIMVDGWAGVAGEIL) traverse the membrane as a helical segment. Residues 534-566 (MLKPLIMFHLKNAFLVKTDKDREEAMDPGSIGF) lie on the Cytoplasmic side of the membrane. The chain crosses the membrane as a helical span at residues 567–588 (NTGEPRIQLYFLLGLVYAPVTP). A topological domain (extracellular) is located at residue Met-589. The helical transmembrane segment at 590 to 605 (LLPFILVFFALAYIVY) threads the bilayer. Topologically, residues 606–625 (RHQIINVYNQEYESAAAFWP) are cytoplasmic. The chain crosses the membrane as a helical span at residues 626–648 (DVHGRVIAALVISQLLLMGLLGT). At 649–651 (KHA) the chain is on the extracellular side. A helical membrane pass occupies residues 652–670 (ALAAPFLIALPVLTIGFHH). Residues 671-771 (FCKGRYEPAF…PSLPFSGKLV (101 aa)) are Cytoplasmic-facing. The tract at residues 741–771 (PTKRQSRRNTPAPSIISGDDSPSLPFSGKLV) is disordered.

It belongs to the CSC1 (TC 1.A.17) family. As to quaternary structure, homodimer.

The protein localises to the membrane. Its activity is regulated as follows. Activated by hyperosmotic shock after mannitol or NaCl treatment. Activated by mechanical pressure: activated in response to membrane stretch and poke. Membrane lipids play a key role in mechanosensation by acting as a wall mainly formed by lipid head groups. Acts as an osmosensitive calcium-permeable cation channel. Specifically conducts cations including Ca(2+), K(+) and Na(+) in vitro. Inactivation or closure of the channel is calcium-dependent. Mechanosensitive ion channel that converts mechanical stimuli into a flow of ions: activated in response to membrane stretch and poke. This chain is Hyperosmolality-gated Ca2+ permeable channel 1.2, found in Arabidopsis thaliana (Mouse-ear cress).